Here is a 120-residue protein sequence, read N- to C-terminus: Large ribosomal subunit protein uL24 (120 aa).

The interval 1–26 (MVRVISSQPRKQRKARYNAPHHMRGS) is disordered. Residues 10–24 (RKQRKARYNAPHHMR) are compositionally biased toward basic residues.

This sequence belongs to the universal ribosomal protein uL24 family. In terms of assembly, part of the 50S ribosomal subunit.

In terms of biological role, one of two assembly initiator proteins, it binds directly to the 5'-end of the 23S rRNA, where it nucleates assembly of the 50S subunit. Located at the polypeptide exit tunnel on the outside of the subunit. This chain is Large ribosomal subunit protein uL24, found in Methanospirillum hungatei JF-1 (strain ATCC 27890 / DSM 864 / NBRC 100397 / JF-1).